The sequence spans 523 residues: SWI/SNF and RSC complexes subunit arp9 (523 aa).

A compositionally biased stretch (basic and acidic residues) spans isoleucine 56 to threonine 72. Disordered stretches follow at residues isoleucine 56 to glycine 92 and glutamine 319 to valine 339. The span at glutamine 79–glycine 92 shows a compositional bias: polar residues. Residues glutamine 319–asparagine 336 are compositionally biased toward basic and acidic residues.

This sequence belongs to the actin family. Component of the RSC complex composed of at least arp9, arp42, rsc1, rsc4, rsc7, rsc9, rsc58, sfh1, snf21, ssr1, ssr2, ssr3 and ssr4. The complex interacts with histone and histone variant components of centromeric chromatin. Component of the SWI/SNF global transcription activator complex composed of at least arp9, arp42, snf5, snf22, snf30, sbf59, sol1, ssr1, ssr2, ssr3, ssr4 and tfg3.

It localises to the cytoplasm. It is found in the nucleus. In terms of biological role, component of the chromatin structure remodeling complex (RSC), which is involved in transcription regulation and nucleosome positioning. Controls particularly membrane and organelle development genes. Part of the SWI/SNF complex, an ATP-dependent chromatin remodeling complex, required for the positive and negative regulation of gene expression of a large number of genes. It changes chromatin structure by altering DNA-histone contacts within a nucleosome, leading eventually to a change in nucleosome position, thus facilitating or repressing binding of gene-specific transcription factors. This chain is SWI/SNF and RSC complexes subunit arp9 (arp9), found in Schizosaccharomyces pombe (strain 972 / ATCC 24843) (Fission yeast).